Here is a 1061-residue protein sequence, read N- to C-terminus: Chimeric ERCC6-PGBD3 protein (1061 aa).

Positions 1–39 (MPNEGIPHSSQTQEQDCLQSQPVSNNEEMAIKQESGGDG) are disordered. The segment covering 8–27 (HSSQTQEQDCLQSQPVSNNE) has biased composition (polar residues). Position 158 is a phosphoserine (S158). K255 participates in a covalent cross-link: Glycyl lysine isopeptide (Lys-Gly) (interchain with G-Cter in SUMO2). Disordered regions lie at residues 287 to 323 (KQGC…VLSK), 344 to 466 (GKVG…QRLS), 494 to 521 (VIQP…INNL), and 537 to 573 (SDAE…SRRR). The span at 353-363 (RPWESDMRPEA) shows a compositional bias: basic and acidic residues. Residues 364–392 (EGDSEGEESEYFPTEEEEEEEDDEVEGAE) are compositionally biased toward acidic residues. Residues S429 and S430 each carry the phosphoserine modification. A compositionally biased stretch (basic and acidic residues) spans 451-462 (RYRDDGDEDYYK). Acidic residues predominate over residues 506–515 (SDEESGDEEG). Position 554 is a phosphoserine (S554).

As to expression, expressed in heart and oocytes, but not in granulosa cells (at protein level).

The protein resides in the nucleus. Involved in repair of DNA damage following UV irradiation, acting either in the absence of ERCC6 or synergistically with ERCC6. Involved in the regulation of gene expression. In the absence of ERCC6, induces the expression of genes characteristic of interferon-like antiviral responses. This response is almost completely suppressed in the presence of ERCC6. In the presence of ERCC6, regulates the expression of genes involved in metabolism regulation, including IGFBP5 and IGFBP7. In vitro binds to PGBD3-related transposable elements, called MER85s; these non-autonomous 140 bp elements are characterized by the presence of PGBD3 terminal inverted repeats and the absence of internal transposase ORF. In Homo sapiens (Human), this protein is Chimeric ERCC6-PGBD3 protein.